The following is a 203-amino-acid chain: Dephospho-CoA kinase (203 aa).

The region spanning 3-201 is the DPCK domain; the sequence is SVGLTGGIGS…QRYLECAAAA (199 aa). An ATP-binding site is contributed by 11–16; it reads GSGKTT.

It belongs to the CoaE family.

Its subcellular location is the cytoplasm. The enzyme catalyses 3'-dephospho-CoA + ATP = ADP + CoA + H(+). It functions in the pathway cofactor biosynthesis; coenzyme A biosynthesis; CoA from (R)-pantothenate: step 5/5. In terms of biological role, catalyzes the phosphorylation of the 3'-hydroxyl group of dephosphocoenzyme A to form coenzyme A. The protein is Dephospho-CoA kinase of Burkholderia pseudomallei (strain 1710b).